Here is a 258-residue protein sequence, read N- to C-terminus: Small ribosomal subunit protein uS3 (258 aa).

In terms of domain architecture, KH type-2 spans 16 to 85; that stretch reads IDEYLEKELE…NPQVEVKEVD (70 aa). The interval 198-258 is disordered; that stretch reads RVTETPAEEA…KDADGEESEK (61 aa). Residues 203-245 are compositionally biased toward acidic residues; that stretch reads PAEEASEASEVVEDLEEVEDLEEIEDLEEVEDLEEVEDLEDTE.

The protein belongs to the universal ribosomal protein uS3 family. In terms of assembly, part of the 30S ribosomal subunit.

Binds the lower part of the 30S subunit head. In Methanothermobacter thermautotrophicus (strain ATCC 29096 / DSM 1053 / JCM 10044 / NBRC 100330 / Delta H) (Methanobacterium thermoautotrophicum), this protein is Small ribosomal subunit protein uS3.